The chain runs to 180 residues: Large ribosomal subunit protein uL5 (180 aa).

This sequence belongs to the universal ribosomal protein uL5 family. Part of the 50S ribosomal subunit; part of the 5S rRNA/L5/L18/L25 subcomplex. Contacts the 5S rRNA and the P site tRNA. Forms a bridge to the 30S subunit in the 70S ribosome.

This is one of the proteins that bind and probably mediate the attachment of the 5S RNA into the large ribosomal subunit, where it forms part of the central protuberance. In the 70S ribosome it contacts protein S13 of the 30S subunit (bridge B1b), connecting the 2 subunits; this bridge is implicated in subunit movement. Contacts the P site tRNA; the 5S rRNA and some of its associated proteins might help stabilize positioning of ribosome-bound tRNAs. This Anaeromyxobacter sp. (strain Fw109-5) protein is Large ribosomal subunit protein uL5.